A 701-amino-acid chain; its full sequence is Aryl hydrocarbon receptor repressor (701 aa).

The disordered stretch occupies residues 1 to 38 (MMIPSGECTYAGRKRRKPIQKRRLTMGTEKSNPSKRHR). Basic residues predominate over residues 12–24 (GRKRRKPIQKRRL). Residues 25–78 (TMGTEKSNPSKRHRDRLNTELDHLASLLPFSPDIISKLDKLSVLRLSVSYLRVK) enclose the bHLH domain. Positions 106–176 (PVQEGRLLLE…RQLHWAMDPP (71 aa)) constitute a PAS domain. Disordered stretches follow at residues 360 to 389 (DPKGTSGDREEDDQKHILRRSPGARGQREM) and 409 to 436 (TEQRSQEGTTKLTRQPSKSEPSTCLVPH). Over residues 365 to 375 (SGDREEDDQKH) the composition is skewed to basic and acidic residues. The span at 414–430 (QEGTTKLTRQPSKSEPS) shows a compositional bias: polar residues. The interval 555–701 (ASTTSCVWLG…SKGSDGIFLP (147 aa)) is needed for transcriptional repression. Glycyl lysine isopeptide (Lys-Gly) (interchain with G-Cter in SUMO2) cross-links involve residues K583 and K660.

Interacts with ARNT, ANKRA2, HDAC4 and HDAC5. Interacts with ARNT; forms a heterodimer with ARNT. As to expression, highly expressed in testis and weakly expressed in heart and liver. Highly expressed in small intestine and cecum in a male-dominant sexual dimorphic fashion.

It localises to the cytoplasm. It is found in the nucleus. Its function is as follows. Mediates dioxin toxicity and is involved in regulation of cell growth and differentiation. Represses the transcription activity of AHR by competing with this transcription factor for heterodimer formation with the ARNT and subsequently binding to the xenobiotic response element (XRE) sequence present in the promoter regulatory region of variety of genes. Represses CYP1A1 by binding the XRE sequence and recruiting ANKRA2, HDAC4 and/or HDAC5. Autoregulates its expression by associating with its own XRE site. This Rattus norvegicus (Rat) protein is Aryl hydrocarbon receptor repressor (Ahrr).